Reading from the N-terminus, the 170-residue chain is MIIERLTGNLRDLNPLDFKVDYVDLEWFETRKKIARFKTRQGKDIAIRLKDAPKLGLSQGDILFKEEKEIIAINILDSEVIHIQAKSVAEVAKICYEIGNRHATLYYGESQFEFKTPFEKPTLALLEKLGVQNRVLSSKLDSKERLTVSMPHNEPNFKVSLASDFKVVMK.

Belongs to the UreE family.

It is found in the cytoplasm. Functionally, involved in urease metallocenter assembly. Binds nickel. Probably functions as a nickel donor during metallocenter assembly. The chain is Urease accessory protein UreE from Helicobacter acinonychis (strain Sheeba).